The sequence spans 252 residues: Centromere protein V (252 aa).

A disordered region spans residues 1 to 80 (MRRTRSAVAT…EEPPPAVTPA (80 aa)). Ser18 is subject to Phosphoserine. Arg39 bears the Omega-N-methylarginine mark. Positions 54 to 64 (SAKPRPKPPPR) are enriched in pro residues. Thr78 is subject to Phosphothreonine. The region spanning 125-237 (HTGGCHCGAV…TEEFNGSDWE (113 aa)) is the CENP-V/GFA domain. Residues Cys129, Cys131, Cys149, Cys151, Cys154, Cys193, and Cys196 each coordinate Zn(2+). Ser234 carries the phosphoserine modification.

This sequence belongs to the Gfa family. Zn(2+) is required as a cofactor.

The protein resides in the chromosome. Its subcellular location is the centromere. It is found in the kinetochore. It localises to the nucleus. The protein localises to the cytoplasm. The protein resides in the cytoskeleton. Its subcellular location is the spindle. Required for distribution of pericentromeric heterochromatin in interphase nuclei and for centromere formation and organization, chromosome alignment and cytokinesis. The sequence is that of Centromere protein V (Cenpv) from Mus musculus (Mouse).